A 114-amino-acid polypeptide reads, in one-letter code: Small ribosomal subunit protein bS6 (114 aa).

The protein belongs to the bacterial ribosomal protein bS6 family.

Its function is as follows. Binds together with bS18 to 16S ribosomal RNA. This is Small ribosomal subunit protein bS6 from Bacteroides thetaiotaomicron (strain ATCC 29148 / DSM 2079 / JCM 5827 / CCUG 10774 / NCTC 10582 / VPI-5482 / E50).